Reading from the N-terminus, the 296-residue chain is MHRLLAWDAACLPPPPAAFRPMEVANFYYEPDCLAYGAKAARAAPRAPAAEPAIGEHERAIDFSPYLEPLAPAADFAAPAPAHHDFLSDLFADDYGAKPSKKPADYGYVSLGRAGAKAAPPACFPPPPPAALKAEPGFEPADCKRADDAPAMAAGFPFALRAYLGYQATPSGSSGSLSTSSSSSPPGTPSPADAKAAPAACFAGPPAAPAKAKAKKTVDKLSDEYKMRRERNNIAVRKSRDKAKMRNLETQHKVLELTAENERLQKKVEQLSRELSTLRNLFKQLPEPLLASAGHC.

A required for Lys-133 sumoylation region spans residues 1-22; that stretch reads MHRLLAWDAACLPPPPAAFRPM. R3 bears the Asymmetric dimethylarginine; by CARM1 mark. Residues 22–104 form a required for MYC transcriptional repression region; sequence MEVANFYYEP…YGAKPSKKPA (83 aa). K39 bears the N6-acetyllysine; alternate mark. Position 39 is an N6-methylated lysine; alternate (K39). K98 and K101 each carry N6-acetyllysine; by KAT2A and KAT2B. K102 carries the N6-acetyllysine; by KAT2A and KAT2B; alternate modification. Residues K102 and K133 each participate in a glycyl lysine isopeptide (Lys-Gly) (interchain with G-Cter in SUMO2); alternate cross-link. Residue K133 forms a Glycyl lysine isopeptide (Lys-Gly) (interchain with G-Cter in SUMO); alternate linkage. K144 is covalently cross-linked (Glycyl lysine isopeptide (Lys-Gly) (interchain with G-Cter in SUMO2)). A disordered region spans residues 171–199; it reads SGSSGSLSTSSSSSPPGTPSPADAKAAPA. T179 bears the Phosphothreonine; by GSK3-beta mark. S180 and S181 each carry an O-linked (GlcNAc) serine glycan. At S184 the chain carries Phosphoserine; by GSK3-beta. T188 bears the Phosphothreonine; by RPS6KA1, CDK2 and MAPK mark. Glycyl lysine isopeptide (Lys-Gly) (interchain with G-Cter in SUMO2) cross-links involve residues K211 and K213. A Phosphothreonine; by RPS6KA1 and PKC/PRKCA modification is found at T217. In terms of domain architecture, bZIP spans 222–285; that stretch reads SDEYKMRRER…STLRNLFKQL (64 aa). The tract at residues 226–246 is basic motif; it reads KMRRERNNIAVRKSRDKAKMR. S239 is subject to Phosphoserine; by PKC/PRKCA. The tract at residues 248-255 is leucine-zipper; the sequence is LETQHKVL. The residue at position 276 (S276) is a Phosphoserine; by CaMK2. Residue K283 forms a Glycyl lysine isopeptide (Lys-Gly) (interchain with G-Cter in SUMO2) linkage.

This sequence belongs to the bZIP family. C/EBP subfamily. Binds DNA as a homodimer and as a heterodimer. Interacts with ATF4. Binds DNA as a heterodimer with ATF4. Interacts with MYB; within the complex, MYB and CEBPB bind to different promoter regions. Can form stable heterodimers with CEBPA, CEBPD and CEBPE. Interacts with SIX1. Isoform 2 and isoform 3 also form heterodimers. Interacts with TRIM28 and PTGES2. Interacts with PRDM16. Interacts with CCDC85B. Forms a complex with THOC5. Interacts with ZNF638; this interaction increases transcriptional activation. Interacts with CIDEA and CIDEC. Interaction with CIDEA increases transcriptional activation of a subset of CEBPB downstream target genes, including ID2, IGF1, PRLR, SOCS1, SOCS3, XDH. Interaction with CIDEC increases transcriptional activation of SOCS1, SOCS3, TGFB1, TGFBR1, ID2 and XDH. Interacts with DDIT3/CHOP. Interacts with EP300; recruits EP300 to chromatin. Interacts with RORA; the interaction disrupts interaction with EP300. Interacts (not methylated) with MED23, MED26, SMARCA2, SMARCB1 and SMARCC1. Interacts with KAT2A and KAT2B. Interacts with ATF5; EP300 is required for ATF5 and CEBPB interaction and DNA binding. Interacts with NFE2L1; the heterodimer represses expression of DSPP during odontoblast differentiation. Sumoylated by polymeric chains of SUMO2 or SUMO3. Sumoylation at Lys-133 is required for inhibition of T-cells proliferation. In adipocytes, sumoylation at Lys-133 by PIAS1 leads to ubiquitination and subsequent proteasomal degradation. Desumoylated by SENP2, which abolishes ubiquitination and stabilizes protein levels. In terms of processing, ubiquitinated, leading to proteasomal degradation. Post-translationally, phosphorylated at Thr-188 by MAPK and CDK2, serves to prime phosphorylation at Thr-179 and Ser-184 by GSK3B and acquire DNA-binding as well as transactivation activities, required to induce adipogenesis. MAPK and CDK2 act sequentially to maintain Thr-188 in the primed phosphorylated state during mitotical cloning expansion and thereby progression of terminal differentiation. Phosphorylation at Thr-217 enhances transactivation activity. Phosphorylation at Ser-276 in response to calcium increases transactivation activity. Phosphorylated at Thr-188 by RPS6KA1. O-glycosylated, glycosylation at Ser-180 and Ser-181 prevents phosphorylation on Thr-188, Ser-184 and Thr-179 and DNA binding activity which delays the adipocyte differentiation program. In terms of processing, acetylated. Acetylation at Lys-39 is an important and dynamic regulatory event that contributes to its ability to transactivate target genes, including those associated with adipogenesis and adipocyte function. Deacetylation by HDAC1 represses its transactivation activity. Acetylated by KAT2A and KAT2B within a cluster of lysine residues between amino acids 98-102, this acetylation is strongly induced by glucocorticoid treatment and enhances transactivation activity. Post-translationally, methylated. Methylation at Arg-3 by CARM1 and at Lys-39 by EHMT2, inhibits transactivation activity. Methylation is probably inhibited by phosphorylation at Thr-188. In terms of tissue distribution, abundantly expressed in myoblasts. Enriched in brown adipose tissue (BAT) versus white adipose tissue (WAT). Expressed in hepatocytes (at protein level). Expressed in T lymphocytes. The expression in granulosa cells of antral follicles is induced by luteinizing hormone. Expressed in chondrocytes and osteoblasts (at protein level).

It is found in the nucleus. The protein localises to the cytoplasm. Important transcription factor regulating the expression of genes involved in immune and inflammatory responses. Also plays a significant role in adipogenesis, as well as in the gluconeogenic pathway, liver regeneration, and hematopoiesis. The consensus recognition site is 5'-T[TG]NNGNAA[TG]-3'. Its functional capacity is governed by protein interactions and post-translational protein modifications. During early embryogenesis, plays essential and redundant roles with CEBPA. Has a promitotic effect on many cell types such as hepatocytes and adipocytes but has an antiproliferative effect on T-cells by repressing MYC expression, facilitating differentiation along the T-helper 2 lineage. Binds to regulatory regions of several acute-phase and cytokines genes and plays a role in the regulation of acute-phase reaction and inflammation. Also plays a role in intracellular bacteria killing. During adipogenesis, is rapidly expressed and, after activation by phosphorylation, induces CEBPA and PPARG, which turn on the series of adipocyte genes that give rise to the adipocyte phenotype. The delayed transactivation of the CEBPA and PPARG genes by CEBPB appears necessary to allow mitotic clonal expansion and thereby progression of terminal differentiation. Essential for female reproduction because of a critical role in ovarian follicle development. Restricts osteoclastogenesis. Together with NFE2L1; represses expression of DSPP during odontoblast differentiation. Its function is as follows. Essential for gene expression induction in activated macrophages. Plays a major role in immune responses such as CD4(+) T-cell response, granuloma formation and endotoxin shock. Not essential for intracellular bacteria killing. Functionally, acts as a dominant negative through heterodimerization with isoform 2. Promotes osteoblast differentiation and osteoclastogenesis. This is CCAAT/enhancer-binding protein beta from Mus musculus (Mouse).